Consider the following 867-residue polypeptide: Alanine--tRNA ligase (867 aa).

Zn(2+) contacts are provided by His-559, His-563, Cys-661, and His-665.

It belongs to the class-II aminoacyl-tRNA synthetase family. Requires Zn(2+) as cofactor.

It localises to the cytoplasm. It catalyses the reaction tRNA(Ala) + L-alanine + ATP = L-alanyl-tRNA(Ala) + AMP + diphosphate. Functionally, catalyzes the attachment of alanine to tRNA(Ala) in a two-step reaction: alanine is first activated by ATP to form Ala-AMP and then transferred to the acceptor end of tRNA(Ala). Also edits incorrectly charged Ser-tRNA(Ala) and Gly-tRNA(Ala) via its editing domain. This is Alanine--tRNA ligase from Aquifex aeolicus (strain VF5).